The following is a 791-amino-acid chain: Phenylalanine--tRNA ligase beta subunit (791 aa).

The tRNA-binding domain occupies 39-149; the sequence is GDEIQNVVTG…SDTAIGKDIK (111 aa). One can recognise a B5 domain in the interval 403-478; that stretch reads IKERNLKVDS…RIYGYNNIPT (76 aa). Mg(2+)-binding residues include D456, D462, E465, and E466. The FDX-ACB domain maps to 698–791; that stretch reads PKFPAVDRDM…LENNLGAELR (94 aa).

This sequence belongs to the phenylalanyl-tRNA synthetase beta subunit family. Type 1 subfamily. Tetramer of two alpha and two beta subunits. The cofactor is Mg(2+).

The protein resides in the cytoplasm. The catalysed reaction is tRNA(Phe) + L-phenylalanine + ATP = L-phenylalanyl-tRNA(Phe) + AMP + diphosphate + H(+). This is Phenylalanine--tRNA ligase beta subunit from Clostridium tetani (strain Massachusetts / E88).